We begin with the raw amino-acid sequence, 209 residues long: MKTSKTASESGINLEIIFAGRSNVGKSSLLKELFGAKVRVGKRPGVTLRPTHAQVSDLLITDMPGFGFMSGVKERKQDIVKDKTVHYIEDNAGRIKIAVLVIDGPAFPEIVDRWDSRDQIPIDVEMFDFLREIGIDTIVAANKMDKVKENESDPLLNEVAIRLGLEPPWQNWKHIIAPISAKKGDLKTLKGLLRDRLHEMKRDDLFKYI.

In terms of domain architecture, EngB-type G spans 12 to 203 (INLEIIFAGR…RDRLHEMKRD (192 aa)). Residues 20 to 27 (GRSNVGKS), 45 to 49 (GVTLR), 62 to 65 (DMPG), 142 to 145 (NKMD), and 179 to 181 (ISA) contribute to the GTP site. Mg(2+)-binding residues include Ser27 and Thr47.

It belongs to the TRAFAC class TrmE-Era-EngA-EngB-Septin-like GTPase superfamily. EngB GTPase family. Requires Mg(2+) as cofactor.

Functionally, necessary for normal cell division and for the maintenance of normal septation. The sequence is that of Probable GTP-binding protein EngB from Methanosarcina mazei (strain ATCC BAA-159 / DSM 3647 / Goe1 / Go1 / JCM 11833 / OCM 88) (Methanosarcina frisia).